The following is a 361-amino-acid chain: Holliday junction branch migration complex subunit RuvB (361 aa).

Polar residues-rich tracts occupy residues 1–15 (MAIKRSGNNNLSPNV) and 28–40 (ERSTSPELEQQEA). The interval 1–41 (MAIKRSGNNNLSPNVKSDLLSPEVIPQERSTSPELEQQEAS) is disordered. The interval 13 to 203 (PNVKSDLLSP…FGLIQRLRFY (191 aa)) is large ATPase domain (RuvB-L). Residues Leu-42, Arg-43, Gly-84, Lys-87, Thr-88, Thr-89, 150–152 (EDF), Arg-193, Tyr-203, and Arg-240 contribute to the ATP site. Position 88 (Thr-88) interacts with Mg(2+). Positions 204–274 (EVDELQQIIL…LASEALDLYQ (71 aa)) are small ATPAse domain (RuvB-S). The interval 277 to 361 (KRGLDWTDRL…PTPLLPWKES (85 aa)) is head domain (RuvB-H). DNA-binding residues include Arg-332 and Arg-337.

Belongs to the RuvB family. As to quaternary structure, homohexamer. Forms an RuvA(8)-RuvB(12)-Holliday junction (HJ) complex. HJ DNA is sandwiched between 2 RuvA tetramers; dsDNA enters through RuvA and exits via RuvB. An RuvB hexamer assembles on each DNA strand where it exits the tetramer. Each RuvB hexamer is contacted by two RuvA subunits (via domain III) on 2 adjacent RuvB subunits; this complex drives branch migration. In the full resolvosome a probable DNA-RuvA(4)-RuvB(12)-RuvC(2) complex forms which resolves the HJ.

Its subcellular location is the cytoplasm. It carries out the reaction ATP + H2O = ADP + phosphate + H(+). Functionally, the RuvA-RuvB-RuvC complex processes Holliday junction (HJ) DNA during genetic recombination and DNA repair, while the RuvA-RuvB complex plays an important role in the rescue of blocked DNA replication forks via replication fork reversal (RFR). RuvA specifically binds to HJ cruciform DNA, conferring on it an open structure. The RuvB hexamer acts as an ATP-dependent pump, pulling dsDNA into and through the RuvAB complex. RuvB forms 2 homohexamers on either side of HJ DNA bound by 1 or 2 RuvA tetramers; 4 subunits per hexamer contact DNA at a time. Coordinated motions by a converter formed by DNA-disengaged RuvB subunits stimulates ATP hydrolysis and nucleotide exchange. Immobilization of the converter enables RuvB to convert the ATP-contained energy into a lever motion, pulling 2 nucleotides of DNA out of the RuvA tetramer per ATP hydrolyzed, thus driving DNA branch migration. The RuvB motors rotate together with the DNA substrate, which together with the progressing nucleotide cycle form the mechanistic basis for DNA recombination by continuous HJ branch migration. Branch migration allows RuvC to scan DNA until it finds its consensus sequence, where it cleaves and resolves cruciform DNA. Its function is as follows. Participates in UV-tolerance of Synechocystis PCC 6803. This chain is Holliday junction branch migration complex subunit RuvB, found in Synechocystis sp. (strain ATCC 27184 / PCC 6803 / Kazusa).